A 176-amino-acid polypeptide reads, in one-letter code: Conidiation-specific protein 8 (176 aa).

Disordered stretches follow at residues 1 to 66 and 79 to 162; these read MDDT…SKLI and AASE…PQGF. Residues 79–99 show a composition bias toward low complexity; sequence AASEAFRSERSASTSSTTSET.

This is Conidiation-specific protein 8 (con-8) from Neurospora crassa (strain ATCC 24698 / 74-OR23-1A / CBS 708.71 / DSM 1257 / FGSC 987).